The following is a 109-amino-acid chain: uncharacterized protein (109 aa).

A run of 3 helical transmembrane segments spans residues 16–36 (HPHL…EIYF), 52–72 (LIVL…LIAL), and 87–107 (ILLC…AYPV).

It localises to the cell membrane. This is an uncharacterized protein from Salmonella typhimurium (strain LT2 / SGSC1412 / ATCC 700720).